The following is a 353-amino-acid chain: Protein RecA (353 aa).

65-72 is a binding site for ATP; the sequence is GPESSGKT. Residues 334 to 345 are compositionally biased toward basic and acidic residues; that stretch reads DAERAGAEREDN. The disordered stretch occupies residues 334-353; it reads DAERAGAEREDNAAADDENF.

This sequence belongs to the RecA family.

The protein resides in the cytoplasm. Can catalyze the hydrolysis of ATP in the presence of single-stranded DNA, the ATP-dependent uptake of single-stranded DNA by duplex DNA, and the ATP-dependent hybridization of homologous single-stranded DNAs. It interacts with LexA causing its activation and leading to its autocatalytic cleavage. The sequence is that of Protein RecA from Edwardsiella ictaluri (strain 93-146).